Reading from the N-terminus, the 436-residue chain is MPGHRSKSEKKDADKQLRRDPYEVLGVLRNSTDQEIKSAYRKLALKYHPDKTANDPVAADMFKEVTFSYNILSDPEKRRQFDSAGFEAVEAESQELELDLSSLGAVNTVFAALFSKLGVPIKTSVSATILEEALNGRVSVDPLVLGQAVSKKVEKQCAHFYAVTISEEEVSAGLVCRVESSSKSKFKLLYFDQEANSGLSLALQEDSKRTGKITSAGMYFLGFPVYRLDHTINSMAQAKDPETAFFKKLDGFQQCEVTELKAGTHVFAVYGDNFFKNVSYTIQVLCAAAFTQEKEDLRSVEAQILTKRAELAKFETEYREVLVQFTDMTSRYAQEMQSIDELLKQRNEIHSAYTTIPLMKRSSSKNRMRKSSFKKAAAKAPAPTEQEEEEEEEEEEEEESSRQKNKKPSTCDKSETLKKKSKWFNLHLKLDKKKPC.

The J domain maps to 20–85 (DPYEVLGVLR…EKRRQFDSAG (66 aa)). Positions 291–348 (TQEKEDLRSVEAQILTKRAELAKFETEYREVLVQFTDMTSRYAQEMQSIDELLKQRNE) form a coiled coil. The segment at 360-416 (KRSSSKNRMRKSSFKKAAAKAPAPTEQEEEEEEEEEEEEESSRQKNKKPSTCDKSET) is disordered. The span at 362 to 377 (SSSKNRMRKSSFKKAA) shows a compositional bias: basic residues. Residues 385 to 399 (EQEEEEEEEEEEEEE) are compositionally biased toward acidic residues.

The protein belongs to the DnaJ family. B/II subfamily. In terms of tissue distribution, expressed constitutively in seedlings, roots, leaves, stems, flowers and siliques.

The protein resides in the membrane. Plays a continuous role in plant development probably in the structural organization of compartments. Seems to not be involved in gravitropism signaling pathway. This chain is Chaperone protein dnaJ 16 (ATJ16), found in Arabidopsis thaliana (Mouse-ear cress).